We begin with the raw amino-acid sequence, 59 residues long: Large ribosomal subunit protein uL30 (59 aa).

Belongs to the universal ribosomal protein uL30 family. Part of the 50S ribosomal subunit.

The polypeptide is Large ribosomal subunit protein uL30 (Erwinia tasmaniensis (strain DSM 17950 / CFBP 7177 / CIP 109463 / NCPPB 4357 / Et1/99)).